A 287-amino-acid chain; its full sequence is Ketoacyl reductase HetN (287 aa).

11–35 (LTGASRGLGVYIARALAKEQATVVC) is an NAD(+) binding site. Ser-142 contributes to the substrate binding site. Catalysis depends on Tyr-155, which acts as the Proton acceptor.

It belongs to the short-chain dehydrogenases/reductases (SDR) family.

Its function is as follows. May be involved in repressing heterocyst differentiation and may be essential for preventing all vegetative cells from differentiating. The chain is Ketoacyl reductase HetN (hetN) from Nostoc sp. (strain PCC 7120 / SAG 25.82 / UTEX 2576).